A 247-amino-acid polypeptide reads, in one-letter code: Small ribosomal subunit protein eS6 (247 aa).

The interval 194–247 is disordered; that stretch reads ALKKKRVTKKREDHAEYTKLLAQRMKEAKERKMERKRSNSRSKGDSIRESTSKK. Residues 217–247 show a composition bias toward basic and acidic residues; sequence RMKEAKERKMERKRSNSRSKGDSIRESTSKK.

The protein belongs to the eukaryotic ribosomal protein eS6 family. Ribosomal protein S6 is the major substrate of protein kinases in eukaryote ribosomes.

Its function is as follows. Component of the 40S small ribosomal subunit. Plays an important role in controlling cell growth and proliferation through the selective translation of particular classes of mRNA. This chain is Small ribosomal subunit protein eS6 (RPS6), found in Aplysia californica (California sea hare).